A 91-amino-acid polypeptide reads, in one-letter code: RNA-binding protein Hfq (91 aa).

Residues 9–69 enclose the Sm domain; sequence DRFLNMLRTG…ISTIMPSSFV (61 aa).

This sequence belongs to the Hfq family. As to quaternary structure, homohexamer.

RNA chaperone that binds small regulatory RNA (sRNAs) and mRNAs to facilitate mRNA translational regulation in response to envelope stress, environmental stress and changes in metabolite concentrations. Also binds with high specificity to tRNAs. The chain is RNA-binding protein Hfq from Pseudothermotoga lettingae (strain ATCC BAA-301 / DSM 14385 / NBRC 107922 / TMO) (Thermotoga lettingae).